The sequence spans 465 residues: Asparagine--tRNA ligase (465 aa).

This sequence belongs to the class-II aminoacyl-tRNA synthetase family. Homodimer.

Its subcellular location is the cytoplasm. The catalysed reaction is tRNA(Asn) + L-asparagine + ATP = L-asparaginyl-tRNA(Asn) + AMP + diphosphate + H(+). In Clostridium perfringens (strain SM101 / Type A), this protein is Asparagine--tRNA ligase.